The primary structure comprises 187 residues: Ribosome-recycling factor (187 aa).

This sequence belongs to the RRF family.

The protein localises to the cytoplasm. In terms of biological role, responsible for the release of ribosomes from messenger RNA at the termination of protein biosynthesis. May increase the efficiency of translation by recycling ribosomes from one round of translation to another. The polypeptide is Ribosome-recycling factor (Methylobacterium nodulans (strain LMG 21967 / CNCM I-2342 / ORS 2060)).